The primary structure comprises 385 residues: GDP-mannose-dependent alpha-(1-6)-phosphatidylinositol monomannoside mannosyltransferase (385 aa).

GDP-alpha-D-mannose is bound by residues Arg205, Lys210, Val262, and Glu299.

Belongs to the glycosyltransferase group 1 family. Glycosyltransferase 4 subfamily.

It carries out the reaction a 1,2-diacyl-sn-glycero-3-phospho-[alpha-D-mannopyranosyl-(1&lt;-&gt;6)-D-myo-inositol] + GDP-alpha-D-mannose = a 2,6-O-bis(alpha-D-mannopyranosyl)-1-phosphatidyl-1D-myo-inositol + GDP + H(+). The catalysed reaction is a 1,2-diacyl-sn-glycero-3-phospho-[alpha-D-6-acyl-mannopyranosyl-(1&lt;-&gt;6)-D-myo-inositol] + GDP-alpha-D-mannose = a 2-O-(alpha-D-mannosyl)-6-O-(6-O-acyl-alpha-D-mannosyl)-1-phosphatidyl-1D-myo-inositol + GDP + H(+). It functions in the pathway phospholipid metabolism; phosphatidylinositol metabolism. Functionally, involved in the biosynthesis of phosphatidyl-myo-inositol mannosides (PIM) which are early precursors in the biosynthesis of lipomannans (LM) and lipoarabinomannans (LAM). Catalyzes the addition of a mannosyl residue from GDP-D-mannose (GDP-Man) to the position 6 of a phosphatidyl-myo-inositol bearing an alpha-1,2-linked mannose residue (PIM1) to generate phosphatidyl-myo-inositol bearing alpha-1,2- and alpha-1,6-linked mannose residues (Ac1PIM2). PimB also catalyzes the addition of a mannosyl residue from GDP-Man to the position 6 of phosphatidyl-myo-inositol bearing an acylated alpha-1,2-linked mannose residue (Ac1PIM1) to generate monoacylated phosphatidyl-myo-inositol bearing alpha-1,2- and alpha-1,6-linked mannose residues (Ac1PIM2). The addition of the second mannosyl residue by PimB preferentially occurs before the acylation of the mannosyl residue transferred by PimA. Also able to transfer a mannosyl residue from GDP-Man to the position 6 of a phosphatidyl-myo-inositol (PI), but this reaction is very slow. The sequence is that of GDP-mannose-dependent alpha-(1-6)-phosphatidylinositol monomannoside mannosyltransferase from Mycobacterium tuberculosis (strain CDC 1551 / Oshkosh).